The following is a 1460-amino-acid chain: Ankyrin repeat-containing protein kinase A (1460 aa).

7 disordered regions span residues 1-32 (MSIKLPLSNINSGGNSNNSSSSNSTSNNNINI), 57-181 (IKQQ…HKSH), 216-259 (RENE…ASST), 272-311 (STSNAATNTNTNANTTSTTKTTSTVRSTSPTQFKPRVEFD), 329-354 (SSPSDFRLNPPSNVHMPTSSLSTSTS), 374-510 (FTPS…SSNP), and 551-608 (CPSA…SSIP). Composition is skewed to low complexity over residues 8–32 (SNINSGGNSNNSSSSNSTSNNNINI), 61–86 (SNNNTSTSVCVSSIHSSSPISSPTSH), and 111–128 (SSGSNSSSSSSGSNNNNN). The segment covering 129 to 140 (QIKTSNGMNKPN) has biased composition (polar residues). Residues 149–162 (KPRENSQNKIDDNK) show a composition bias toward basic and acidic residues. Low complexity-rich tracts occupy residues 220-259 (NNNNSSNNNSNNNNNNNNNNNNSNNINNVNGNKSSLASST) and 272-300 (STSNAATNTNTNANTTSTTKTTSTVRSTS). 2 stretches are compositionally biased toward polar residues: residues 329-345 (SSPSDFRLNPPSNVHMP) and 384-404 (PTNSSQVDTLQMSTESITIQP). The span at 405–422 (SSLDSSSESVSDGLQSVS) shows a compositional bias: low complexity. The span at 423 to 434 (GSPVTASPSPTI) shows a compositional bias: polar residues. Residues 435-461 (SNNTNATTTNNNNNTNTNNNNNNNNNQ) are compositionally biased toward low complexity. Residues 462–472 (HNHHHHQHSHS) are compositionally biased toward basic residues. Residues 467–667 (HQHSHSQQHD…IFRGCGIPLD (201 aa)) form an interaction with 14-3-3 protein region. Positions 486–497 (PSSPTSPTLLPS) are enriched in low complexity. The Phorbol-ester/DAG-type zinc finger occupies 499-551 (THDFSSEYSSNPGGKCAICRKPLWSFPISDKSRRCRDCSLVVHRACVPLATEC). Residues 559 to 568 (SKLSVPNGNQ) are compositionally biased toward polar residues. Over residues 569–608 (SNSSSSSSSSSSSSSSSNSSSSNTKGHSRTPSSPSVSSIP) the composition is skewed to low complexity. In terms of domain architecture, GRAM spans 653–724 (RDFHFIFRGC…SNIASIEKRS (72 aa)). ANK repeat units lie at residues 814-843 (SKEILLMSAIKNNNLDMVVTLLNYYCQVNS), 852-883 (KGYTPLHNAVFSECSDQIFMHLLNQKEVRVRE), 887-920 (DGNTPLHYFCQKFKSPECQRIVQAMIEKGANINE), 924-955 (NGETPLHKAIFNHSVRLLMVYILLKNNANVNI), and 959-988 (AGESPLHYAVRLGRLDVAKMLLAAGADPTI). One can recognise a Protein kinase domain in the interval 1112 to 1375 (LEYTEKIGSG…ATEAMTALAV (264 aa)). ATP-binding positions include 1118-1126 (IGSGASGKV) and K1139. D1231 acts as the Proton acceptor in catalysis. A helical membrane pass occupies residues 1293-1313 (MGIVMWEIVYCVVYGCYMIPY). Residues 1425–1460 (PEEEQIYQEAMEKQRRNQEASANRNQKNKELLNNNN) adopt a coiled-coil conformation. A disordered region spans residues 1434–1460 (AMEKQRRNQEASANRNQKNKELLNNNN).

The protein belongs to the protein kinase superfamily. TKL Ser/Thr protein kinase family.

It is found in the cytoplasm. The protein localises to the cytoskeleton. It localises to the membrane. Its subcellular location is the nucleus. The enzyme catalyses L-seryl-[protein] + ATP = O-phospho-L-seryl-[protein] + ADP + H(+). The catalysed reaction is L-threonyl-[protein] + ATP = O-phospho-L-threonyl-[protein] + ADP + H(+). Involved in the development of the fruiting body. Overexpression phenocopies the spnA null phenotype. In Dictyostelium discoideum (Social amoeba), this protein is Ankyrin repeat-containing protein kinase A (arkA).